A 330-amino-acid chain; its full sequence is D-alanine--D-alanine ligase (330 aa).

Positions N122–R323 constitute an ATP-grasp domain. T151 to T206 contributes to the ATP binding site. Positions 277, 290, and 292 each coordinate Mg(2+).

This sequence belongs to the D-alanine--D-alanine ligase family. Mg(2+) serves as cofactor. Mn(2+) is required as a cofactor.

It is found in the cytoplasm. It carries out the reaction 2 D-alanine + ATP = D-alanyl-D-alanine + ADP + phosphate + H(+). It participates in cell wall biogenesis; peptidoglycan biosynthesis. Functionally, cell wall formation. This Porphyromonas gingivalis (strain ATCC 33277 / DSM 20709 / CIP 103683 / JCM 12257 / NCTC 11834 / 2561) protein is D-alanine--D-alanine ligase.